A 380-amino-acid chain; its full sequence is Cytochrome b (380 aa).

4 helical membrane-spanning segments follow: residues F34–M54, W78–I99, W114–L134, and F179–L199. Heme b contacts are provided by H84 and H98. Heme b is bound at residue H183. H202 contributes to the a ubiquinone binding site. Helical transmembrane passes span Y227–A247, L289–H309, I321–G341, and F348–P368.

It belongs to the cytochrome b family. The cytochrome bc1 complex contains 3 respiratory subunits (MT-CYB, CYC1 and UQCRFS1), 2 core proteins (UQCRC1 and UQCRC2) and probably 6 low-molecular weight proteins. The cofactor is heme b.

It localises to the mitochondrion inner membrane. Functionally, component of the ubiquinol-cytochrome c reductase complex (complex III or cytochrome b-c1 complex) that is part of the mitochondrial respiratory chain. The b-c1 complex mediates electron transfer from ubiquinol to cytochrome c. Contributes to the generation of a proton gradient across the mitochondrial membrane that is then used for ATP synthesis. The sequence is that of Cytochrome b (mt-cyb) from Pelophylax plancyi (Korean pond frog).